The chain runs to 379 residues: Homoserine O-succinyltransferase (379 aa).

Residues 48-357 (NAVLICHALS…SAHGHDAFLM (310 aa)) enclose the AB hydrolase-1 domain. The active-site Nucleophile is Ser-154. Arg-224 serves as a coordination point for substrate. Catalysis depends on residues Asp-319 and His-352. Asp-353 serves as a coordination point for substrate.

This sequence belongs to the AB hydrolase superfamily. MetX family. As to quaternary structure, homodimer.

It is found in the cytoplasm. It catalyses the reaction L-homoserine + succinyl-CoA = O-succinyl-L-homoserine + CoA. It participates in amino-acid biosynthesis; L-methionine biosynthesis via de novo pathway; O-succinyl-L-homoserine from L-homoserine: step 1/1. Its function is as follows. Transfers a succinyl group from succinyl-CoA to L-homoserine, forming succinyl-L-homoserine. The protein is Homoserine O-succinyltransferase of Neisseria gonorrhoeae (strain ATCC 700825 / FA 1090).